A 580-amino-acid polypeptide reads, in one-letter code: Potassium-transporting ATPase potassium-binding subunit (580 aa).

The next 10 membrane-spanning stretches (helical) occupy residues 3–23 (ASGA…SVPL), 65–85 (DYAF…YALQ), 136–156 (GLGV…VALI), 179–199 (LYIL…QGVV), 263–283 (LSNF…CHTF), 293–313 (GWAV…ACVA), 399–419 (GLYG…LMVG), 436–456 (MASL…AIAV), 504–524 (AIGV…LALA), and 546–566 (LFVG…FVPA).

This sequence belongs to the KdpA family. The system is composed of three essential subunits: KdpA, KdpB and KdpC.

It localises to the cell inner membrane. Functionally, part of the high-affinity ATP-driven potassium transport (or Kdp) system, which catalyzes the hydrolysis of ATP coupled with the electrogenic transport of potassium into the cytoplasm. This subunit binds the periplasmic potassium ions and delivers the ions to the membrane domain of KdpB through an intramembrane tunnel. In Sorangium cellulosum (strain So ce56) (Polyangium cellulosum (strain So ce56)), this protein is Potassium-transporting ATPase potassium-binding subunit.